The following is a 76-amino-acid chain: Small proline-rich protein 2F (76 aa).

3 repeat units span residues 21–29, 30–38, and 39–47. The segment at 21 to 47 is 3 X 9 AA approximate tandem repeats; it reads PKCPEPCSPSVCPEPCPPPKCPEPCPE. The interval 53 to 76 is disordered; that stretch reads SFQQKCPPVQPPPPCQQKCPPKSK.

It belongs to the cornifin (SPRR) family. In terms of tissue distribution, expressed in uterus.

The protein localises to the cytoplasm. Its function is as follows. Cross-linked envelope protein of keratinocytes. It is a keratinocyte protein that first appears in the cell cytosol, but ultimately becomes cross-linked to membrane proteins by transglutaminase. All that results in the formation of an insoluble envelope beneath the plasma membrane. This is Small proline-rich protein 2F (Sprr2f) from Mus musculus (Mouse).